The following is a 238-amino-acid chain: Purine nucleoside phosphorylase DeoD-type (238 aa).

A purine D-ribonucleoside is bound at residue histidine 4. Phosphate is bound by residues glycine 20, arginine 24, arginine 43, and 87–90 (RVGS). A purine D-ribonucleoside is bound by residues 179–181 (EME) and 203–204 (SD). Catalysis depends on aspartate 204, which acts as the Proton donor.

The protein belongs to the PNP/UDP phosphorylase family. Homohexamer; trimer of homodimers.

The catalysed reaction is a purine D-ribonucleoside + phosphate = a purine nucleobase + alpha-D-ribose 1-phosphate. It carries out the reaction a purine 2'-deoxy-D-ribonucleoside + phosphate = a purine nucleobase + 2-deoxy-alpha-D-ribose 1-phosphate. Catalyzes the reversible phosphorolytic breakdown of the N-glycosidic bond in the beta-(deoxy)ribonucleoside molecules, with the formation of the corresponding free purine bases and pentose-1-phosphate. The polypeptide is Purine nucleoside phosphorylase DeoD-type (Mannheimia succiniciproducens (strain KCTC 0769BP / MBEL55E)).